Consider the following 233-residue polypeptide: Large ribosomal subunit protein uL1 (233 aa).

This sequence belongs to the universal ribosomal protein uL1 family. In terms of assembly, part of the 50S ribosomal subunit.

Binds directly to 23S rRNA. The L1 stalk is quite mobile in the ribosome, and is involved in E site tRNA release. In terms of biological role, protein L1 is also a translational repressor protein, it controls the translation of the L11 operon by binding to its mRNA. The sequence is that of Large ribosomal subunit protein uL1 from Syntrophomonas wolfei subsp. wolfei (strain DSM 2245B / Goettingen).